We begin with the raw amino-acid sequence, 344 residues long: Small ribosomal subunit biogenesis GTPase RsgA (344 aa).

One can recognise a CP-type G domain in the interval lysine 100–phenylalanine 268. Residues asparagine 156 to aspartate 159 and glycine 210 to serine 218 each bind GTP. Zn(2+)-binding residues include cysteine 292, cysteine 297, histidine 299, and cysteine 305.

Belongs to the TRAFAC class YlqF/YawG GTPase family. RsgA subfamily. In terms of assembly, monomer. Associates with 30S ribosomal subunit, binds 16S rRNA. Zn(2+) is required as a cofactor.

The protein resides in the cytoplasm. One of several proteins that assist in the late maturation steps of the functional core of the 30S ribosomal subunit. Helps release RbfA from mature subunits. May play a role in the assembly of ribosomal proteins into the subunit. Circularly permuted GTPase that catalyzes slow GTP hydrolysis, GTPase activity is stimulated by the 30S ribosomal subunit. The polypeptide is Small ribosomal subunit biogenesis GTPase RsgA (Actinobacillus pleuropneumoniae serotype 5b (strain L20)).